A 92-amino-acid chain; its full sequence is Exodeoxyribonuclease 7 small subunit (92 aa).

The disordered stretch occupies residues 1-22 (MPKKNAISESTNSTPETAPAMT). Residues 7 to 16 (ISESTNSTPE) show a composition bias toward polar residues.

The protein belongs to the XseB family. Heterooligomer composed of large and small subunits.

It localises to the cytoplasm. It carries out the reaction Exonucleolytic cleavage in either 5'- to 3'- or 3'- to 5'-direction to yield nucleoside 5'-phosphates.. Functionally, bidirectionally degrades single-stranded DNA into large acid-insoluble oligonucleotides, which are then degraded further into small acid-soluble oligonucleotides. This is Exodeoxyribonuclease 7 small subunit from Photorhabdus laumondii subsp. laumondii (strain DSM 15139 / CIP 105565 / TT01) (Photorhabdus luminescens subsp. laumondii).